The sequence spans 117 residues: Large ribosomal subunit protein uL18 (117 aa).

The protein belongs to the universal ribosomal protein uL18 family. In terms of assembly, part of the 50S ribosomal subunit; part of the 5S rRNA/L5/L18/L25 subcomplex. Contacts the 5S and 23S rRNAs.

In terms of biological role, this is one of the proteins that bind and probably mediate the attachment of the 5S RNA into the large ribosomal subunit, where it forms part of the central protuberance. The sequence is that of Large ribosomal subunit protein uL18 from Vibrio proteolyticus (Aeromonas proteolytica).